The chain runs to 154 residues: Ascorbate-specific PTS system EIIA component (154 aa).

Residues 6–150 (SLAVNKSIRL…QEVLDLIDRT (145 aa)) form the PTS EIIA type-2 domain. Histidine 68 functions as the Tele-phosphohistidine intermediate in the catalytic mechanism. Histidine 68 carries the phosphohistidine modification.

Its subcellular location is the cytoplasm. Functionally, the phosphoenolpyruvate-dependent sugar phosphotransferase system (sugar PTS), a major carbohydrate active transport system, catalyzes the phosphorylation of incoming sugar substrates concomitantly with their translocation across the cell membrane. The enzyme II UlaABC PTS system is involved in ascorbate transport. The chain is Ascorbate-specific PTS system EIIA component (ulaC) from Shigella dysenteriae serotype 1 (strain Sd197).